Consider the following 763-residue polypeptide: High glucose sensor RGT2 (763 aa).

A disordered region spans residues 1–28 (MNDSQNCLRQREENSHLNPGNDFGHHQG). Residues 1–99 (MNDSQNCLRQ…PLPLRSNVMS (99 aa)) are Cytoplasmic-facing. The chain crosses the membrane as a helical span at residues 100–120 (VLVGIFVAVGGFLFGYDTGLI). The Extracellular segment spans residues 121 to 144 (NSITDMPYVKTYIAPNHSYFTTSQ). Residue Asn-136 is glycosylated (N-linked (GlcNAc...) asparagine). The helical transmembrane segment at 145–165 (IAILVSFLSLGTFFGALIAPY) threads the bilayer. The Cytoplasmic portion of the chain corresponds to 166 to 175 (ISDSYGRKPT). The chain crosses the membrane as a helical span at residues 176–196 (IMFSTAVIFSIGNSLQVASGG). Residue Leu-197 is a topological domain, extracellular. The helical transmembrane segment at 198–218 (VLLIVGRVISGIGIGIISAVV) threads the bilayer. Residues 219–231 (PLYQAEAAQKNLR) lie on the Cytoplasmic side of the membrane. Residues 232 to 252 (GAIISSYQWAITIGLLVSSAV) form a helical membrane-spanning segment. The Extracellular portion of the chain corresponds to 253–266 (SQGTHSKNGPSSYR). The helical transmembrane segment at 267 to 287 (IPIGLQYVWSSILAVGMIFLP) threads the bilayer. Residues 288–357 (ESPRYYVLKD…SENRPKQILR (70 aa)) lie on the Cytoplasmic side of the membrane. Residues 358–378 (IFTGIAIQAFQQASGINFIFY) form a helical membrane-spanning segment. At 379–393 (YGVNFFNNTGVDNSY) the chain is on the extracellular side. An N-linked (GlcNAc...) asparagine glycan is attached at Asn-385. A helical membrane pass occupies residues 394-414 (LVSFISYAVNVAFSIPGMYLV). Residues 415-421 (DRIGRRP) are Cytoplasmic-facing. Residues 422–442 (VLLAGGVIMAIANLVIAIVGV) traverse the membrane as a helical segment. Over 443 to 452 (SEGKTVVASK) the chain is Extracellular. The chain crosses the membrane as a helical span at residues 453-473 (IMIAFICLFIAAFSATWGGVV). Residues 474 to 491 (WVVSAELYPLGVRSKCTA) lie on the Cytoplasmic side of the membrane. The helical transmembrane segment at 492-512 (ICAAANWLVNFTCALITPYIV) threads the bilayer. Over 513-524 (DVGSHTSSMGPK) the chain is Extracellular. The helical transmembrane segment at 525 to 545 (IFFIWGGLNVVAVIVVYFAVY) threads the bilayer. Residues 546 to 763 (ETRGLTLEEI…SKHSQYTSPQ (218 aa)) are Cytoplasmic-facing. A compositionally biased stretch (low complexity) spans 725-737 (SSTTSNDTSFSPS). The disordered stretch occupies residues 725 to 763 (SSTTSNDTSFSPSHNSNARTSSNWTSDLASKHSQYTSPQ). The segment covering 738–763 (HNSNARTSSNWTSDLASKHSQYTSPQ) has biased composition (polar residues).

This sequence belongs to the major facilitator superfamily. Sugar transporter (TC 2.A.1.1) family. In terms of assembly, interacts with YCK1. Interacts with MTH1 and STD1. In terms of processing, phosphorylated in the C-terminal tail on Yck consensus sites in a yeast casein kinases YCK1 and YCK2 (Yck)-dependent manner. This phosphorylation is required for interaction with HXT corepressors MTH1 and STD1 and ultimately HXT expression.

Its subcellular location is the cell membrane. Low-affinity high glucose sensor that is part of the sensor/receptor-repressor (SSR) glucose-signaling pathway, which detects extracellular glucose and induces expression of glucose transporters that bring glucose into the cell. The transporter-like sensor generates an intracellular signal in the presence of high levels of glucose to promote high glucose-induced expression of HXT1. Binding of glucose to the RGT2 transmembrane domain activates a downstream signaling cascade, leading to phosphorylation of the RGT1 corepressors MTH1 and STD1, targeting them for SCF(Grr1)-dependent ubiquitination and degradation. Depletion of the corepressors robs RGT1 of its ability to repress expression of HXT genes, leading to accumulation of glucose transporters in the plasma membrane. Even though RGT2 is similar to glucose transporters, it appears to be unable to transport glucose. The protein is High glucose sensor RGT2 of Saccharomyces cerevisiae (strain ATCC 204508 / S288c) (Baker's yeast).